Here is a 446-residue protein sequence, read N- to C-terminus: MKEIEKLKEEYPLLNKLIATEEVFWVNPNMEKYETAIKDSPLSEENVKDAEERLKRFASYIAKVFPETKETKGIIESPLLKIPSMKQALEKNYEQPILGELLLKCDSHLPISGSIKARGGIYEVLKHAEQLALQHGMLTEEDNYAILDSDTCREFFATYSIAVGSTGNLGLSIGIMSAKLGFNVTVHMSADAKQWKKDLLRSKGVNVIEYEADYSKAVEEGRRQADADPSCYFVDDENSHDLFLGYAVAASRLQKQLEELKIVVDEEHPLFVYLPCGVGGGPGGVAFGLKLLYKDNVHCFFAEPTHSPCMLIGLMTGLHDKIAVQDIGIDNVTDADGLAVGRPSGFVGKTMEPFLSGNYTVSDEELYRLLKELADTENIYLEPSALAGMIGPVKVCKEDAYLQKQQLMEKVQKGTHIVWGTGGSMVPEDVMNGYYKTGEALTILEK.

Position 116 is an N6-(pyridoxal phosphate)lysine (K116).

This sequence belongs to the serine/threonine dehydratase family. DsdA subfamily. It depends on pyridoxal 5'-phosphate as a cofactor.

It catalyses the reaction D-serine = pyruvate + NH4(+). In Bacillus thuringiensis subsp. konkukian (strain 97-27), this protein is Probable D-serine dehydratase.